The chain runs to 428 residues: MPKEKPHVNIVFIGHVDHGKSTTIGRLLYDTGNIPETIIKKFEEMGEKGKSFKFAWVMDRLKEERERGITIDVAHTKFETPHRYITIIDAPGHRDFVKNMITGASQADAAVLVVAATDGVMPQTKEHAFLARTLGIKHIIVTINKMDMVNYDQKVFEKVKAQVEKLLKTLGYKDFPVIPTSAWNGDNVVKKSDKMPWYNGPTLIEALDQIPEPEKPIDKPLRIPIQDVYSIKGVGTVPVGRVETGKLKVGDVVIFEPASTIFHKPIQGEVKSIEMHHEPLQEALPGDNIGFNVRGVSKNDIKRGDVAGHTDKPPTVVRTKDTFKAQIIVLNHPTAITVGYSPVLHAHTAQIPVRFEQILAKVDPRTGNIVEENPQFIKTGDSAIVVLRPMKPVVLEPVKEIPQLGRFAIRDMGMTIAAGMVISIQKGE.

Residues 5–217 (KPHVNIVFIG…DQIPEPEKPI (213 aa)) form the tr-type G domain. A G1 region spans residues 14–21 (GHVDHGKS). 14–21 (GHVDHGKS) is a GTP binding site. Mg(2+) is bound at residue S21. The G2 stretch occupies residues 68–72 (GITID). The interval 89–92 (DAPG) is G3. GTP contacts are provided by residues 89-93 (DAPGH) and 144-147 (NKMD). Residues 144–147 (NKMD) form a G4 region. A G5 region spans residues 181 to 183 (SAW).

This sequence belongs to the TRAFAC class translation factor GTPase superfamily. Classic translation factor GTPase family. EF-Tu/EF-1A subfamily.

The protein localises to the cytoplasm. The catalysed reaction is GTP + H2O = GDP + phosphate + H(+). Its function is as follows. GTP hydrolase that promotes the GTP-dependent binding of aminoacyl-tRNA to the A-site of ribosomes during protein biosynthesis. In Pyrococcus horikoshii (strain ATCC 700860 / DSM 12428 / JCM 9974 / NBRC 100139 / OT-3), this protein is Elongation factor 1-alpha.